The chain runs to 261 residues: Receptor expression-enhancing protein 4 (261 aa).

The next 2 membrane-spanning stretches (helical) occupy residues 1–21 (MVSW…YPAY) and 35–55 (YVRW…ETFT). Residues 167–261 (YTDALYPDEP…KKPAQSEPEN (95 aa)) form a disordered region. Over residues 221-230 (KSLQRSQSLR) the composition is skewed to polar residues.

This sequence belongs to the DP1 family. As to quaternary structure, interacts with microtubules. As to expression, during gastrulation, expressed on the dorsal side of the embryo and then in the neural plate and neural tube. At tailbud stages, expressed in the somites, neural tube and otic vesicle.

Its subcellular location is the endoplasmic reticulum membrane. In terms of biological role, microtubule-binding protein required to ensure proper cell division and nuclear envelope reassembly by sequestering the endoplasmic reticulum away from chromosomes during mitosis. Probably acts by clearing the endoplasmic reticulum membrane from metaphase chromosomes. May play a role in the maintenance of both the nervous system and the musculature. This chain is Receptor expression-enhancing protein 4 (reep4), found in Xenopus laevis (African clawed frog).